A 115-amino-acid chain; its full sequence is uncharacterized protein (115 aa).

The next 2 membrane-spanning stretches (helical) occupy residues 15–35 (FSTQ…EVLF) and 52–72 (FDGV…YYSI).

The protein resides in the membrane. This is an uncharacterized protein from Saccharomyces cerevisiae (strain ATCC 204508 / S288c) (Baker's yeast).